A 584-amino-acid polypeptide reads, in one-letter code: Proteasome-associated ATPase (584 aa).

The stretch at Glu-16–Pro-91 forms a coiled coil. Gly-273–Leu-278 is an ATP binding site. The segment at Tyr-583–Leu-584 is docks into pockets in the proteasome alpha-ring.

This sequence belongs to the AAA ATPase family. Homohexamer. Assembles into a hexameric ring structure that caps the 20S proteasome core. Strongly interacts with the prokaryotic ubiquitin-like protein Pup through a hydrophobic interface; the interacting region of ARC lies in its N-terminal coiled-coil domain. There is one Pup binding site per ARC hexamer ring. Upon ATP-binding, the C-terminus of ARC interacts with the alpha-rings of the proteasome core, possibly by binding to the intersubunit pockets.

It functions in the pathway protein degradation; proteasomal Pup-dependent pathway. ATPase which is responsible for recognizing, binding, unfolding and translocation of pupylated proteins into the bacterial 20S proteasome core particle. May be essential for opening the gate of the 20S proteasome via an interaction with its C-terminus, thereby allowing substrate entry and access to the site of proteolysis. Thus, the C-termini of the proteasomal ATPase may function like a 'key in a lock' to induce gate opening and therefore regulate proteolysis. The sequence is that of Proteasome-associated ATPase from Nocardioides sp. (strain ATCC BAA-499 / JS614).